Reading from the N-terminus, the 199-residue chain is Peptidyl-tRNA hydrolase (199 aa).

A tRNA-binding site is contributed by Tyr18. Catalysis depends on His23, which acts as the Proton acceptor. Tyr72, Asn74, and Asn120 together coordinate tRNA.

The protein belongs to the PTH family. As to quaternary structure, monomer.

The protein resides in the cytoplasm. It catalyses the reaction an N-acyl-L-alpha-aminoacyl-tRNA + H2O = an N-acyl-L-amino acid + a tRNA + H(+). Its function is as follows. Hydrolyzes ribosome-free peptidyl-tRNAs (with 1 or more amino acids incorporated), which drop off the ribosome during protein synthesis, or as a result of ribosome stalling. Functionally, catalyzes the release of premature peptidyl moieties from peptidyl-tRNA molecules trapped in stalled 50S ribosomal subunits, and thus maintains levels of free tRNAs and 50S ribosomes. The protein is Peptidyl-tRNA hydrolase of Bifidobacterium animalis subsp. lactis (strain AD011).